Here is a 77-residue protein sequence, read N- to C-terminus: Large ribosomal subunit protein bL28 (77 aa).

Belongs to the bacterial ribosomal protein bL28 family.

In Polynucleobacter necessarius subsp. necessarius (strain STIR1), this protein is Large ribosomal subunit protein bL28.